A 178-amino-acid chain; its full sequence is Large ribosomal subunit protein uL10 (178 aa).

It belongs to the universal ribosomal protein uL10 family. As to quaternary structure, part of the ribosomal stalk of the 50S ribosomal subunit. The N-terminus interacts with L11 and the large rRNA to form the base of the stalk. The C-terminus forms an elongated spine to which L12 dimers bind in a sequential fashion forming a multimeric L10(L12)X complex.

Its function is as follows. Forms part of the ribosomal stalk, playing a central role in the interaction of the ribosome with GTP-bound translation factors. The sequence is that of Large ribosomal subunit protein uL10 from Albidiferax ferrireducens (strain ATCC BAA-621 / DSM 15236 / T118) (Rhodoferax ferrireducens).